Reading from the N-terminus, the 255-residue chain is MTCALQPGRPSGGAPWTAEPAAFYEPGRAGKPGRGAEPAAPAMYDDESAIDFSAYIDSMAAVPTLELCHDELFADLFNSNHKAGALELLPGGPARLGGPGPAPRPLKREPDWGDGDAPGSLLPAQVAACAQTVVSLAPAAQPTPPASPDPPRRSPAPPAPGPARDKAAGKRGPDRGSPEYRQRRERNNIAVRKSRDKAKRRNQEMQQKLVELSAENEKLQQRVEQLTRDLAGLRRFFKQLPGAPFLPGAGAADAR.

Disordered regions lie at residues 1–42 (MTCA…AAPA), 91–121 (GGPARLGGPGPAPRPLKREPDWGDGDAPGSL), and 138–206 (PAAQ…QEMQ). Lys-107 is covalently cross-linked (Glycyl lysine isopeptide (Lys-Gly) (interchain with G-Cter in SUMO)). The segment covering 141–161 (QPTPPASPDPPRRSPAPPAPG) has biased composition (pro residues). A compositionally biased stretch (basic and acidic residues) spans 163–187 (ARDKAAGKRGPDRGSPEYRQRRERN). Positions 177 to 240 (SPEYRQRRER…AGLRRFFKQL (64 aa)) constitute a bZIP domain. The basic motif stretch occupies residues 181 to 208 (RQRRERNNIAVRKSRDKAKRRNQEMQQK). The leucine-zipper stretch occupies residues 212-240 (LSAENEKLQQRVEQLTRDLAGLRRFFKQL).

The protein belongs to the bZIP family. C/EBP subfamily. In terms of assembly, binds DNA as a homodimer and as a heterodimer. Can form stable heterodimers with CEBPA, CEBPB and CEBPE. Directly interacts with SPI1/PU.1; this interaction does not affect DNA-binding properties of each partner. Interacts with PRDM16.

The protein localises to the nucleus. Transcription activator that recognizes two different DNA motifs: the CCAAT homology common to many promoters and the enhanced core homology common to many enhancers. Important transcription factor regulating the expression of genes involved in immune and inflammatory responses. Transcriptional activator that enhances IL6 transcription alone and as heterodimer with CEBPB. This chain is CCAAT/enhancer-binding protein delta (CEBPD), found in Ovis aries (Sheep).